The sequence spans 403 residues: Phosphoglycerate kinase (403 aa).

Residues 21-23, Arg-36, 59-62, Arg-119, and Arg-154 contribute to the substrate site; these read DFN and HLGR. ATP-binding positions include Lys-207, Gly-299, Glu-330, and 357-360; that span reads GGDA.

Belongs to the phosphoglycerate kinase family. In terms of assembly, monomer.

The protein resides in the cytoplasm. It catalyses the reaction (2R)-3-phosphoglycerate + ATP = (2R)-3-phospho-glyceroyl phosphate + ADP. Its pathway is carbohydrate degradation; glycolysis; pyruvate from D-glyceraldehyde 3-phosphate: step 2/5. This Chlamydia felis (strain Fe/C-56) (Chlamydophila felis) protein is Phosphoglycerate kinase.